The chain runs to 429 residues: Phosphoribosylamine--glycine ligase (429 aa).

The region spanning 109–316 (KDFLARHKIP…LVELCLKACD (208 aa)) is the ATP-grasp domain. 135–196 (LREKGTPIVV…EEFLDGEEAS (62 aa)) contacts ATP. Mg(2+)-binding residues include Glu286 and Asn288.

This sequence belongs to the GARS family. Mg(2+) serves as cofactor. The cofactor is Mn(2+).

The enzyme catalyses 5-phospho-beta-D-ribosylamine + glycine + ATP = N(1)-(5-phospho-beta-D-ribosyl)glycinamide + ADP + phosphate + H(+). The protein operates within purine metabolism; IMP biosynthesis via de novo pathway; N(1)-(5-phospho-D-ribosyl)glycinamide from 5-phospho-alpha-D-ribose 1-diphosphate: step 2/2. This Haemophilus influenzae (strain ATCC 51907 / DSM 11121 / KW20 / Rd) protein is Phosphoribosylamine--glycine ligase.